Reading from the N-terminus, the 513-residue chain is NAD(P)H-quinone oxidoreductase subunit 2, chloroplastic (513 aa).

Transmembrane regions (helical) follow at residues Asn11–Ile31, Ser38–Phe58, Gly78–Ser98, Phe112–Leu132, Val133–Ala153, Leu167–Leu187, Phe219–Ile239, Pro256–Thr276, Trp290–Ala310, Met318–Asn338, Tyr348–Leu368, Ala389–Phe409, His422–Leu442, and Leu478–Ile498.

Belongs to the complex I subunit 2 family. In terms of assembly, NDH is composed of at least 16 different subunits, 5 of which are encoded in the nucleus.

The protein localises to the plastid. It localises to the chloroplast thylakoid membrane. The catalysed reaction is a plastoquinone + NADH + (n+1) H(+)(in) = a plastoquinol + NAD(+) + n H(+)(out). It carries out the reaction a plastoquinone + NADPH + (n+1) H(+)(in) = a plastoquinol + NADP(+) + n H(+)(out). Its function is as follows. NDH shuttles electrons from NAD(P)H:plastoquinone, via FMN and iron-sulfur (Fe-S) centers, to quinones in the photosynthetic chain and possibly in a chloroplast respiratory chain. The immediate electron acceptor for the enzyme in this species is believed to be plastoquinone. Couples the redox reaction to proton translocation, and thus conserves the redox energy in a proton gradient. The sequence is that of NAD(P)H-quinone oxidoreductase subunit 2, chloroplastic from Staurastrum punctulatum (Green alga).